We begin with the raw amino-acid sequence, 228 residues long: NAD(P)H-hydrate epimerase (228 aa).

One can recognise a YjeF N-terminal domain in the interval 9–209; that stretch reads VRAVERLAHR…LLGLTPAFLA (201 aa). Residue 53–57 participates in (6S)-NADPHX binding; it reads NNGGD. Residues asparagine 54 and aspartate 115 each coordinate K(+). (6S)-NADPHX-binding positions include 119–125 and aspartate 148; that span reads GIGLARP. Serine 151 contacts K(+).

This sequence belongs to the NnrE/AIBP family. K(+) is required as a cofactor.

The catalysed reaction is (6R)-NADHX = (6S)-NADHX. It catalyses the reaction (6R)-NADPHX = (6S)-NADPHX. In terms of biological role, catalyzes the epimerization of the S- and R-forms of NAD(P)HX, a damaged form of NAD(P)H that is a result of enzymatic or heat-dependent hydration. This is a prerequisite for the S-specific NAD(P)H-hydrate dehydratase to allow the repair of both epimers of NAD(P)HX. The chain is NAD(P)H-hydrate epimerase from Bordetella bronchiseptica (strain ATCC BAA-588 / NCTC 13252 / RB50) (Alcaligenes bronchisepticus).